Reading from the N-terminus, the 332-residue chain is 3-ketodihydrosphingosine reductase (332 aa).

An N-terminal signal peptide occupies residues 1 to 25; that stretch reads MLLLAAAGLVAFVLLLYMVSPLISP. Topologically, residues 26-270 are cytoplasmic; that stretch reads KPLALPGAHV…GNFNSSIGSD (245 aa). NADPH is bound by residues G39, S41, S42, G43, R64, K68, and D93. The GXSXG motif lies at 39 to 43; that stretch reads GGSSG. Catalysis depends on S172, which acts as the Proton donor. Y186 (proton acceptor) is an active-site residue. NADP(+) contacts are provided by Y186 and K190. Residue K190 is the Lowers pKa of active site Tyr of the active site. A helical membrane pass occupies residues 271 to 291; it reads GYMLSSLTCGMAPVTSITEGL. Residues 292 to 293 are Lumenal-facing; the sequence is QQ. The chain crosses the membrane as a helical span at residues 294 to 314; it reads VVTMGLFRTIALFYLGSFDNI. At 315 to 332 the chain is on the cytoplasmic side; the sequence is VRRCMVQKAKPEVVDKTA.

The protein belongs to the short-chain dehydrogenases/reductases (SDR) family.

Its subcellular location is the endoplasmic reticulum membrane. It catalyses the reaction sphinganine + NADP(+) = 3-oxosphinganine + NADPH + H(+). It participates in lipid metabolism; sphingolipid metabolism. Its function is as follows. Catalyzes the reduction of 3'-oxosphinganine (3-ketodihydrosphingosine/KDS) to sphinganine (dihydrosphingosine/DHS), the second step of de novo sphingolipid biosynthesis. This Mus musculus (Mouse) protein is 3-ketodihydrosphingosine reductase (Kdsr).